A 131-amino-acid polypeptide reads, in one-letter code: Small ribosomal subunit protein eS17A (131 aa).

The protein belongs to the eukaryotic ribosomal protein eS17 family. In terms of assembly, component of the small ribosomal subunit (SSU). Mature yeast ribosomes consist of a small (40S) and a large (60S) subunit. The 40S small subunit contains 1 molecule of ribosomal RNA (18S rRNA) and at least 33 different proteins. The large 60S subunit contains 3 rRNA molecules (25S, 5.8S and 5S rRNA) and at least 46 different proteins.

Its subcellular location is the cytoplasm. In terms of biological role, component of the ribosome, a large ribonucleoprotein complex responsible for the synthesis of proteins in the cell. The small ribosomal subunit (SSU) binds messenger RNAs (mRNAs) and translates the encoded message by selecting cognate aminoacyl-transfer RNA (tRNA) molecules. The large subunit (LSU) contains the ribosomal catalytic site termed the peptidyl transferase center (PTC), which catalyzes the formation of peptide bonds, thereby polymerizing the amino acids delivered by tRNAs into a polypeptide chain. The nascent polypeptides leave the ribosome through a tunnel in the LSU and interact with protein factors that function in enzymatic processing, targeting, and the membrane insertion of nascent chains at the exit of the ribosomal tunnel. This Schizosaccharomyces pombe (strain 972 / ATCC 24843) (Fission yeast) protein is Small ribosomal subunit protein eS17A (rps1701).